We begin with the raw amino-acid sequence, 288 residues long: Elongation factor Ts (288 aa).

An involved in Mg(2+) ion dislocation from EF-Tu region spans residues 82 to 85; the sequence is TDFV.

It belongs to the EF-Ts family.

The protein resides in the cytoplasm. Functionally, associates with the EF-Tu.GDP complex and induces the exchange of GDP to GTP. It remains bound to the aminoacyl-tRNA.EF-Tu.GTP complex up to the GTP hydrolysis stage on the ribosome. This is Elongation factor Ts from Chlorobium chlorochromatii (strain CaD3).